The chain runs to 198 residues: Basic helix-loop-helix transcription factor amos (198 aa).

Residues 76-131 (EQQQHHLQANPLGKNQGRSPRYWNKQQRSKPYDKLSTSMSSSTSSASSSSSSSAGF) are disordered. A compositionally biased stretch (low complexity) spans 111–129 (STSMSSSTSSASSSSSSSA). Positions 138-190 (KRRLAANARERRRMNSLNDAFDKLRDVVPSLGHDRRLSKYETLQMAQAYIGDL) constitute a bHLH domain.

In terms of assembly, efficient DNA binding requires dimerization with another bHLH protein. Interacts with Daughterless (da). In terms of tissue distribution, during embryonic development, expression is seen in a small cluster of ectodermal cells during stage 10 which becomes restricted to 1 cell by stage 11. Expression is lost from this cell in the thorax and then the abdomen. Later expression is restricted to sensory organ precursors. Very transient expression was detected in distal leg disks at approximately 0-4 hours after puparium formation (APF), correlating with the anlage of the innervated tarsal claw.

The protein resides in the nucleus. Functionally, transcription factor involved in early neurogenesis; sensillum basiconica formation and maybe sensillum trichodea development. Promotes multiple dendritic (MD) neuron formation. Required for olfactory sensilla; regulated by lozenge (lz). The chain is Basic helix-loop-helix transcription factor amos (amos) from Drosophila melanogaster (Fruit fly).